The chain runs to 450 residues: MVPLVAVVSGPRAQLFACLLRLGTQQVGPLQLHTGASHAARNHYEVLVLGGGSGGITMAARMKRKVGAENVAIVEPSERHFYQPIWTLVGAGAKQLSSSGRPTASVIPSGVEWIKARVTELNPDKNCIHTDDDEKISYRYLIIALGIQLDYEKIKGLPEGFAHPKIGSNYSVKTVEKTWKALQDFKEGNAIFTFPNTPVKCAGAPQKIMYLSEAYFRKTGKRSKANIIFNTSLGAIFGVKKYADALQEIIQERNLTVNYKKNLIEVRADKQEAVFENLDKPGETQVISYEMLHVTPPMSPPDVLKTSPVADAAGWVDVDKETLQHRRYPNVFGIGDCTNLPTSKTAAAVAAQSGILDRTISVIMKNQTPTKKYDGYTSCPLVTGYNRVILAEFDYKAEPLETFPFDQSKERLSMYLMKADLMPFLYWNMMLRGYWGGPAFLRKLFHLGMS.

Residues 53 to 54 (SG), Glu75, Gln83, and Val118 each bind FAD. Lys173 carries the N6-acetyllysine modification. The active-site Cysteine persulfide intermediate is the Cys201. A disulfide bridge links Cys201 with Cys379. Residue Asp336 coordinates FAD. Ser343 carries the phosphoserine modification. 344–347 (KTAA) contributes to the FAD binding site. Catalysis depends on Cys379, which acts as the Cysteine persulfide intermediate.

This sequence belongs to the SQRD family. Requires FAD as cofactor.

It localises to the mitochondrion. The catalysed reaction is ubiquinone-10 + hydrogen sulfide + sulfite + 2 H(+) = ubiquinol-10 + thiosulfate. The enzyme catalyses a quinone + hydrogen sulfide + glutathione + H(+) = S-sulfanylglutathione + a quinol. It catalyses the reaction ubiquinone-10 + hydrogen sulfide + glutathione + H(+) = S-sulfanylglutathione + ubiquinol-10. In terms of biological role, catalyzes the oxidation of hydrogen sulfide with the help of a quinone, such as ubiquinone-10, giving rise to thiosulfate and ultimately to sulfane (molecular sulfur) atoms. Requires an additional electron acceptor; can use sulfite, sulfide or cyanide (in vitro). It is believed the in vivo electron acceptor is glutathione. The chain is Sulfide:quinone oxidoreductase, mitochondrial from Homo sapiens (Human).